Reading from the N-terminus, the 486-residue chain is Catalase (486 aa).

The segment at 1-28 (MENKKLTAANGRPIADNQNSQTAGPRGP) is disordered. Active-site residues include His54 and Asn127. Tyr337 contributes to the heme binding site.

It belongs to the catalase family. As to quaternary structure, homodimer. Heme serves as cofactor.

It catalyses the reaction 2 H2O2 = O2 + 2 H2O. Decomposes hydrogen peroxide into water and oxygen; serves to protect cells from the toxic effects of hydrogen peroxide. May be involved in aerotolerance of B.fragilis. This chain is Catalase (katA), found in Bacteroides fragilis (strain YCH46).